Here is a 143-residue protein sequence, read N- to C-terminus: Interleukin-3 (143 aa).

Positions 1–19 (MSRLPVLLLLHLLVSPGLQ) are cleaved as a signal peptide. Cysteine 35 and cysteine 103 are joined by a disulfide. Asparagine 89 carries N-linked (GlcNAc...) asparagine glycosylation.

It belongs to the IL-3 family. In terms of assembly, monomer. As to expression, activated T-cells, mast cells, natural killer cells.

It localises to the secreted. Granulocyte/macrophage colony-stimulating factors are cytokines that act in hematopoiesis by controlling the production, differentiation, and function of 2 related white cell populations of the blood, the granulocytes and the monocytes-macrophages. Its function is as follows. This CSF induces granulocytes, macrophages, mast cells, stem cells, erythroid cells, eosinophils and megakaryocytes. The sequence is that of Interleukin-3 (IL3) from Macaca mulatta (Rhesus macaque).